Reading from the N-terminus, the 644-residue chain is Neurofilament medium polypeptide (644 aa).

Residues 1–33 (VKVELDKKVQSLQDEVAFLRTNHEEEVADLLAQ) are coil 1B. Residues 1–197 (VKVELDKKVQ…KLLEGEETRF (197 aa)) form the IF rod domain. Serine 11 bears the Phosphoserine mark. Positions 34-50 (IQASHITVERKDYLKTD) are linker 12. The coil 2A stretch occupies residues 51–72 (ISSALKEIRSQLECHSDQNMHQ). Residues 73–76 (AEEW) are linker 2. Positions 77-197 (FKCRYAKLTE…KLLEGEETRF (121 aa)) are coil 2B. At tyrosine 105 the chain carries Phosphotyrosine. Residues serine 131, serine 203, and serine 215 each carry the phosphoserine modification. Residues 198–643 (STFSGSITGP…HAIVKEVTQS (446 aa)) form a tail region. Residue threonine 217 is glycosylated (O-linked (GlcNAc) threonine). Phosphoserine is present on residues serine 253 and serine 269. A disordered region spans residues 270–582 (VKEEEKEEEA…GGDRSEEKVV (313 aa)). Residues 274-292 (EKEEEAEGKEEEQEAEEEV) show a composition bias toward acidic residues. A Phosphoserine modification is found at serine 298. Acidic residues predominate over residues 308-328 (KEEEGEKEEEGQEEEEEEEDE). The segment covering 329–350 (GVKSDQAEEGGSEKEGSSKNEG) has biased composition (basic and acidic residues). Residues serine 332, serine 340, serine 345, and serine 346 each carry the phosphoserine modification. The span at 351–368 (EQEEGETEAEGEVEEAEA) shows a compositional bias: acidic residues. Residue threonine 357 is modified to Phosphothreonine. Residues 369-400 (KEEKKTEEKSEEVAAKEEPVTEAKVGKPEKAK) are compositionally biased toward basic and acidic residues. 4 positions are modified to phosphoserine: serine 401, serine 406, serine 442, and serine 465. Positions 422-470 (GEQKEEEEKVEEEKKKAAKESPKEEKVEKKEEKPKDVPKKKAESPVKEE) are enriched in basic and acidic residues. Over residues 474-483 (EAATITKPTK) the composition is skewed to low complexity. The span at 485–508 (GLEKETKEGEKPLQQEKEKEKAGE) shows a compositional bias: basic and acidic residues. 3 positions are modified to phosphoserine: serine 512, serine 550, and serine 566. Residues 545 to 557 (TKEKGSGREEEKG) are compositionally biased toward basic and acidic residues. A compositionally biased stretch (basic and acidic residues) spans 568-582 (ADEKKGGDRSEEKVV).

Belongs to the intermediate filament family. Forms heterodimers with NEFL; which can further hetero-oligomerize (in vitro). Forms heterodimers with INA (in vitro). There are a number of repeats of the tripeptide K-S-P, NFM is phosphorylated on a number of the serines in this motif. It is thought that phosphorylation of NFM results in the formation of interfilament cross bridges that are important in the maintenance of axonal caliber. Post-translationally, phosphorylation seems to play a major role in the functioning of the larger neurofilament polypeptides (NF-M and NF-H), the levels of phosphorylation being altered developmentally and coincidentally with a change in the neurofilament function. In terms of processing, phosphorylated in the head and rod regions by the PKC kinase PKN1, leading to the inhibition of polymerization.

The protein localises to the cytoplasm. It is found in the cytoskeleton. The protein resides in the cell projection. It localises to the axon. Neurofilaments usually contain three intermediate filament proteins: NEFL, NEFM, and NEFH which are involved in the maintenance of neuronal caliber. May additionally cooperate with the neuronal intermediate filament proteins PRPH and INA to form neuronal filamentous networks. This Oryctolagus cuniculus (Rabbit) protein is Neurofilament medium polypeptide (NEFM).